We begin with the raw amino-acid sequence, 83 residues long: Large ribosomal subunit protein uL24 (83 aa).

Belongs to the universal ribosomal protein uL24 family. As to quaternary structure, part of the 50S ribosomal subunit.

In terms of biological role, one of two assembly initiator proteins, it binds directly to the 5'-end of the 23S rRNA, where it nucleates assembly of the 50S subunit. Functionally, one of the proteins that surrounds the polypeptide exit tunnel on the outside of the subunit. This Symbiobacterium thermophilum (strain DSM 24528 / JCM 14929 / IAM 14863 / T) protein is Large ribosomal subunit protein uL24.